A 154-amino-acid polypeptide reads, in one-letter code: Transcription antitermination protein NusB (154 aa).

This sequence belongs to the NusB family.

Functionally, involved in transcription antitermination. Required for transcription of ribosomal RNA (rRNA) genes. Binds specifically to the boxA antiterminator sequence of the ribosomal RNA (rrn) operons. The protein is Transcription antitermination protein NusB of Hyphomonas neptunium (strain ATCC 15444).